We begin with the raw amino-acid sequence, 179 residues long: Adenine phosphoribosyltransferase (179 aa).

The protein belongs to the purine/pyrimidine phosphoribosyltransferase family. As to quaternary structure, homodimer.

Its subcellular location is the cytoplasm. The catalysed reaction is AMP + diphosphate = 5-phospho-alpha-D-ribose 1-diphosphate + adenine. It functions in the pathway purine metabolism; AMP biosynthesis via salvage pathway; AMP from adenine: step 1/1. Its function is as follows. Catalyzes a salvage reaction resulting in the formation of AMP, that is energically less costly than de novo synthesis. The protein is Adenine phosphoribosyltransferase of Beijerinckia indica subsp. indica (strain ATCC 9039 / DSM 1715 / NCIMB 8712).